The following is a 444-amino-acid chain: Elongation factor 1-alpha (444 aa).

Residues 15–236 (KPHLNLAVIG…ALDTFQPPPR (222 aa)) form the tr-type G domain. Residues 24–31 (GHVDNGKS) are G1. 24–31 (GHVDNGKS) is a binding site for GTP. Ser-31 contacts Mg(2+). Positions 80 to 84 (GVTIE) are G2. Residues 101-104 (DLPG) form a G3 region. GTP-binding positions include 101 to 105 (DLPGH) and 163 to 166 (NKMD). Residues 163–166 (NKMD) are G4. The G5 stretch occupies residues 202-204 (SAI).

This sequence belongs to the TRAFAC class translation factor GTPase superfamily. Classic translation factor GTPase family. EF-Tu/EF-1A subfamily.

The protein resides in the cytoplasm. The enzyme catalyses GTP + H2O = GDP + phosphate + H(+). In terms of biological role, GTP hydrolase that promotes the GTP-dependent binding of aminoacyl-tRNA to the A-site of ribosomes during protein biosynthesis. This is Elongation factor 1-alpha from Pyrobaculum islandicum (strain DSM 4184 / JCM 9189 / GEO3).